The following is a 288-amino-acid chain: Serpentine receptor class gamma-1 (288 aa).

7 helical membrane-spanning segments follow: residues 25–45 (LFLQ…VIYI), 59–79 (FYTI…FSIF), 118–138 (FQIL…LWPL), 148–168 (LKSI…TIAI), 197–217 (FSIL…TMLI), 238–258 (VYLS…FLVL), and 268–288 (ILHG…TYVM).

This sequence belongs to the nematode receptor-like protein srg family.

The protein localises to the membrane. The chain is Serpentine receptor class gamma-1 (srg-1) from Caenorhabditis elegans.